Reading from the N-terminus, the 541-residue chain is MKALVENLKATARETDATDIRAAFAADPNRFSRFSTAFDDLLFDYSKCAVNDRIIDGLEALAKAAKVEEKRDAMFRGDIINITEERAVLHTALRNRSNRPVLVDGKDVMPDVNAVLEAMGKFADDIRSGALKGATGKKITDVVNIGIGGSDLGPVMATLALAPFHDGPRLHFVSNVDGAHIADTLTLLDPETSLFIVASKTFTTIETMTNAATARAFIAGKLGEAAVGHHFAAVSTALDKVGAFGIDAARVFGFWDWVGGRYSIWSAIGLPLMIAIGKENFGRFLDGGHAIDEHFRSAPLRQNIPMLLGLIGFYNRNVLGYPSRAILPYDQRLTRFPAYLQQLDMESNGKGVTLDSQPVEFSTGPVVWGEPGTNGQHAFYQLIHQGTDVIPAEFMIAANGHEKDLRHQHQLLMANCLAQSEALMKGRTLAEAKAQLTSKGMDDAKADKIAPHRVFTGNRPSLTIVYDQLDPFALGRLIALYEHRVFVEGALFNINSFDQWGVELGKELATGLLPVIEGKESAEGHDSSTAGLVAALLKAAR.

Glu-346 serves as the catalytic Proton donor. Catalysis depends on residues His-377 and Lys-506.

This sequence belongs to the GPI family.

It localises to the cytoplasm. It catalyses the reaction alpha-D-glucose 6-phosphate = beta-D-fructose 6-phosphate. Its pathway is carbohydrate biosynthesis; gluconeogenesis. It participates in carbohydrate degradation; glycolysis; D-glyceraldehyde 3-phosphate and glycerone phosphate from D-glucose: step 2/4. In terms of biological role, catalyzes the reversible isomerization of glucose-6-phosphate to fructose-6-phosphate. This Rhizobium meliloti (strain 1021) (Ensifer meliloti) protein is Glucose-6-phosphate isomerase.